The primary structure comprises 359 residues: UDP-N-acetylglucosamine--N-acetylmuramyl-(pentapeptide) pyrophosphoryl-undecaprenol N-acetylglucosamine transferase (359 aa).

UDP-N-acetyl-alpha-D-glucosamine contacts are provided by residues Thr15–Gly17, Asn127, Arg166, Ser191, Ile245, Ala264–Glu269, and Gln290.

It belongs to the glycosyltransferase 28 family. MurG subfamily.

The protein resides in the cell inner membrane. It catalyses the reaction di-trans,octa-cis-undecaprenyl diphospho-N-acetyl-alpha-D-muramoyl-L-alanyl-D-glutamyl-meso-2,6-diaminopimeloyl-D-alanyl-D-alanine + UDP-N-acetyl-alpha-D-glucosamine = di-trans,octa-cis-undecaprenyl diphospho-[N-acetyl-alpha-D-glucosaminyl-(1-&gt;4)]-N-acetyl-alpha-D-muramoyl-L-alanyl-D-glutamyl-meso-2,6-diaminopimeloyl-D-alanyl-D-alanine + UDP + H(+). It functions in the pathway cell wall biogenesis; peptidoglycan biosynthesis. In terms of biological role, cell wall formation. Catalyzes the transfer of a GlcNAc subunit on undecaprenyl-pyrophosphoryl-MurNAc-pentapeptide (lipid intermediate I) to form undecaprenyl-pyrophosphoryl-MurNAc-(pentapeptide)GlcNAc (lipid intermediate II). The protein is UDP-N-acetylglucosamine--N-acetylmuramyl-(pentapeptide) pyrophosphoryl-undecaprenol N-acetylglucosamine transferase of Pseudomonas putida (strain ATCC 47054 / DSM 6125 / CFBP 8728 / NCIMB 11950 / KT2440).